The primary structure comprises 361 residues: Probable mannose-1-phosphate guanylyltransferase 1 (361 aa).

Residues L6 and V7 each contribute to the GDP-alpha-D-mannose site. Diphosphate is bound by residues G9, G11, T12, R13, and K23. Positions 85, 109, 111, 146, and 173 each coordinate GDP-alpha-D-mannose.

It belongs to the transferase hexapeptide repeat family.

The catalysed reaction is alpha-D-mannose 1-phosphate + GTP + H(+) = GDP-alpha-D-mannose + diphosphate. The protein operates within nucleotide-sugar biosynthesis; GDP-alpha-D-mannose biosynthesis; GDP-alpha-D-mannose from alpha-D-mannose 1-phosphate (GTP route): step 1/1. Its function is as follows. Catalyzes a reaction of the Smirnoff-Wheeler pathway, the major route to ascorbate biosynthesis in plants. The polypeptide is Probable mannose-1-phosphate guanylyltransferase 1 (Oryza sativa subsp. japonica (Rice)).